The following is a 220-amino-acid chain: Glutathione S-transferase (220 aa).

A GST N-terminal domain is found at 1-77 (MLKLHGFSVS…YIEQTQSGKA (77 aa)). Glutathione is bound by residues Tyr12, Val49, and 61 to 62 (ET). Positions 82 to 211 (DPFEQAKVRE…ADKEASMPAF (130 aa)) constitute a GST C-terminal domain.

This sequence belongs to the GST superfamily. In terms of assembly, monomer and homodimer.

Its subcellular location is the cytoplasm. The enzyme catalyses RX + glutathione = an S-substituted glutathione + a halide anion + H(+). Conjugation of reduced glutathione to a wide number of exogenous and endogenous hydrophobic electrophiles. This chain is Glutathione S-transferase, found in Pseudomonas putida (strain ATCC 700007 / DSM 6899 / JCM 31910 / BCRC 17059 / LMG 24140 / F1).